Reading from the N-terminus, the 241-residue chain is 2,3-bisphosphoglycerate-dependent phosphoglycerate mutase (241 aa).

H12 acts as the Tele-phosphohistidine intermediate in catalysis. Substrate-binding positions include 24–25, R61, 117–120, and K128; these read SG and ERYY. E117 functions as the Proton donor/acceptor in the catalytic mechanism.

The protein belongs to the phosphoglycerate mutase family. BPG-dependent PGAM subfamily.

The catalysed reaction is (2R)-2-phosphoglycerate = (2R)-3-phosphoglycerate. It functions in the pathway carbohydrate degradation; glycolysis; pyruvate from D-glyceraldehyde 3-phosphate: step 3/5. Catalyzes the interconversion of 2-phosphoglycerate and 3-phosphoglycerate. The sequence is that of 2,3-bisphosphoglycerate-dependent phosphoglycerate mutase from Methanosarcina mazei (strain ATCC BAA-159 / DSM 3647 / Goe1 / Go1 / JCM 11833 / OCM 88) (Methanosarcina frisia).